The sequence spans 380 residues: Forkhead box protein F1 (380 aa).

Residues methionine 1–methionine 19 are compositionally biased toward polar residues. The segment at methionine 1 to arginine 49 is disordered. Positions lysine 52–arginine 146 form a DNA-binding region, fork-head.

The protein localises to the nucleus. The polypeptide is Forkhead box protein F1 (foxf1) (Danio rerio (Zebrafish)).